We begin with the raw amino-acid sequence, 790 residues long: Penicillin-binding protein 1A (790 aa).

Over 1–20 the chain is Cytoplasmic; sequence MANVRKRRKKKNEHKALRLT. A helical; Signal-anchor for type II membrane protein transmembrane segment spans residues 21–41; that stretch reads FITLLMVFLFSCVAAAGVGLA. Topologically, residues 42 to 790 are extracellular; sequence MIKAAPPLDV…RKRKMIKPQI (749 aa). Residues 61-230 form a transglycosylase region; that stretch reads SVIYDDKNKL…PQSPSTFYNA (170 aa). Glutamate 100 serves as the catalytic Proton donor; for transglycosylase activity. The transpeptidase stretch occupies residues 363–656; it reads ASVSIVDYKT…AALIWKLIMG (294 aa). Serine 402 functions as the Acyl-ester intermediate; for transpeptidase activity in the catalytic mechanism. Positions 720-790 are disordered; the sequence is NKDKDDDDDD…RKRKMIKPQI (71 aa). A compositionally biased stretch (acidic residues) spans 724 to 740; that stretch reads DDDDDDKDKDKEDEEEN. The span at 741-779 shows a compositional bias: basic and acidic residues; that stretch reads KDEKNEDKKEAKDNTKNKDKDKKKDNDRKIDMDKKPDSS. The segment covering 780–790 has biased composition (basic residues); the sequence is KRKRKMIKPQI.

It in the N-terminal section; belongs to the glycosyltransferase 51 family. In the C-terminal section; belongs to the transpeptidase family.

The protein localises to the cell membrane. It catalyses the reaction [GlcNAc-(1-&gt;4)-Mur2Ac(oyl-L-Ala-gamma-D-Glu-L-Lys-D-Ala-D-Ala)](n)-di-trans,octa-cis-undecaprenyl diphosphate + beta-D-GlcNAc-(1-&gt;4)-Mur2Ac(oyl-L-Ala-gamma-D-Glu-L-Lys-D-Ala-D-Ala)-di-trans,octa-cis-undecaprenyl diphosphate = [GlcNAc-(1-&gt;4)-Mur2Ac(oyl-L-Ala-gamma-D-Glu-L-Lys-D-Ala-D-Ala)](n+1)-di-trans,octa-cis-undecaprenyl diphosphate + di-trans,octa-cis-undecaprenyl diphosphate + H(+). It carries out the reaction Preferential cleavage: (Ac)2-L-Lys-D-Ala-|-D-Ala. Also transpeptidation of peptidyl-alanyl moieties that are N-acyl substituents of D-alanine.. It functions in the pathway cell wall biogenesis; peptidoglycan biosynthesis. In terms of biological role, cell wall formation. Synthesis of cross-linked peptidoglycan from the lipid intermediates. The enzyme has a penicillin-insensitive transglycosylase N-terminal domain (formation of linear glycan strands) and a penicillin-sensitive transpeptidase C-terminal domain (cross-linking of the peptide subunits). The polypeptide is Penicillin-binding protein 1A (pbpA) (Clostridium tetani (strain Massachusetts / E88)).